We begin with the raw amino-acid sequence, 151 residues long: Small ribosomal subunit protein uS19 (151 aa).

It belongs to the universal ribosomal protein uS19 family.

In terms of biological role, protein S19 forms a complex with S13 that binds strongly to the 16S ribosomal RNA. The protein is Small ribosomal subunit protein uS19 of Picrophilus torridus (strain ATCC 700027 / DSM 9790 / JCM 10055 / NBRC 100828 / KAW 2/3).